We begin with the raw amino-acid sequence, 197 residues long: Holliday junction branch migration complex subunit RuvA (197 aa).

The interval 1–63 is domain I; the sequence is MYAYLKGIIT…EDAHLLYGFR (63 aa). Positions 64–142 are domain II; that stretch reads SEDEKKLFLS…VAGDDLPAKV (79 aa). Residues 143 to 147 are flexible linker; sequence AVQAS. The interval 148-197 is domain III; that stretch reads AENQELEEAMEAMLALGYKATELKKIKKFFEGTTDTAENYIKSALKMLVK.

Belongs to the RuvA family. In terms of assembly, homotetramer. Forms an RuvA(8)-RuvB(12)-Holliday junction (HJ) complex. HJ DNA is sandwiched between 2 RuvA tetramers; dsDNA enters through RuvA and exits via RuvB. An RuvB hexamer assembles on each DNA strand where it exits the tetramer. Each RuvB hexamer is contacted by two RuvA subunits (via domain III) on 2 adjacent RuvB subunits; this complex drives branch migration. In the full resolvosome a probable DNA-RuvA(4)-RuvB(12)-RuvC(2) complex forms which resolves the HJ.

The protein localises to the cytoplasm. In terms of biological role, the RuvA-RuvB-RuvC complex processes Holliday junction (HJ) DNA during genetic recombination and DNA repair, while the RuvA-RuvB complex plays an important role in the rescue of blocked DNA replication forks via replication fork reversal (RFR). RuvA specifically binds to HJ cruciform DNA, conferring on it an open structure. The RuvB hexamer acts as an ATP-dependent pump, pulling dsDNA into and through the RuvAB complex. HJ branch migration allows RuvC to scan DNA until it finds its consensus sequence, where it cleaves and resolves the cruciform DNA. This chain is Holliday junction branch migration complex subunit RuvA, found in Streptococcus pneumoniae serotype 19F (strain G54).